Reading from the N-terminus, the 1887-residue chain is Protein TIC 214 (1887 aa).

Helical transmembrane passes span 18 to 38, 64 to 84, 87 to 107, 124 to 144, 172 to 192, and 221 to 241; these read IINS…FSIG, FITG…HLAL, PHTI…WNNH, LSIQ…HFIL, VGWL…LVWI, and IFSI…PSPI. Disordered regions lie at residues 248–300, 786–805, and 1569–1603; these read EASK…EGWD, EEQT…DNKR, and LPSN…NLSP. Residues 256-268 are compositionally biased toward acidic residues; it reads VESEEERDVEIET. A coiled-coil region spans residues 775–816; it reads KEREFKILESREEQTKREEKKEKDKKEDNKRKEQARIAIEEA. Over residues 1578 to 1597 the composition is skewed to basic and acidic residues; sequence RSQETKEPPSQRERGSDIEN.

This sequence belongs to the TIC214 family. As to quaternary structure, part of the Tic complex.

It localises to the plastid. The protein resides in the chloroplast inner membrane. In terms of biological role, involved in protein precursor import into chloroplasts. May be part of an intermediate translocation complex acting as a protein-conducting channel at the inner envelope. The sequence is that of Protein TIC 214 from Solanum bulbocastanum (Wild potato).